A 153-amino-acid polypeptide reads, in one-letter code: Probable inactive ribonuclease-like protein 13 (153 aa).

The first 22 residues, 1–22, serve as a signal peptide directing secretion; sequence MAPDVAWLLVLPLVFRPTLVTG.

This sequence belongs to the pancreatic ribonuclease family.

It localises to the secreted. In terms of biological role, does not exhibit any ribonuclease activity. The chain is Probable inactive ribonuclease-like protein 13 (Rnase13) from Mus musculus (Mouse).